A 413-amino-acid polypeptide reads, in one-letter code: Variant surface glycoprotein YnAT 1.3 (413 aa).

An N-terminal signal peptide occupies residues 1-22; it reads MLDNSRARSIVHLLILLKAHVI. N-linked (GlcNAc...) asparagine glycans are attached at residues asparagine 91, asparagine 361, and asparagine 379. The GPI-anchor amidated asparagine moiety is linked to residue asparagine 379. Positions 380-413 are cleaved as a propeptide — removed in mature form; the sequence is SSNPTSRQNSVVQEPTTVSAAAITPLILPWTLLI.

The protein resides in the cell membrane. Functionally, VSG forms a coat on the surface of the parasite. The trypanosome evades the immune response of the host by expressing a series of antigenically distinct VSGs from an estimated 1000 VSG genes. This is Variant surface glycoprotein YnAT 1.3 from Trypanosoma congolense.